We begin with the raw amino-acid sequence, 276 residues long: Golgi apparatus membrane protein TVP23 homolog C (276 aa).

At Met-1 the chain carries N-acetylmethionine. The disordered stretch occupies residues 1 to 21 (MLQQDSNDDTEDVSLFDAEEE). Transmembrane regions (helical) follow at residues 52–72 (LLCELLSSSFITCMVTIILLL) and 126–146 (IFWLGLIACSVLWVIFAFSAL). The disordered stretch occupies residues 254–276 (GESPNSRGTGEPGPKFHLASGMH).

This sequence belongs to the TVP23 family.

The protein resides in the membrane. The sequence is that of Golgi apparatus membrane protein TVP23 homolog C (TVP23C) from Homo sapiens (Human).